Here is a 799-residue protein sequence, read N- to C-terminus: Lon protease (799 aa).

In terms of domain architecture, Lon N-terminal spans 7-200; that stretch reads LPVLPLRDIV…KVFALMEGEI (194 aa). 352 to 359 is an ATP binding site; the sequence is GPPGVGKT. Positions 587-768 constitute a Lon proteolytic domain; the sequence is VDQVGIVTGL…DEVLKHALTG (182 aa). Active-site residues include Ser-674 and Lys-717. The interval 772-799 is disordered; that stretch reads PVEWNEAEEPITTSAKKDDGDSDAMLTH.

This sequence belongs to the peptidase S16 family. In terms of assembly, homohexamer. Organized in a ring with a central cavity.

The protein localises to the cytoplasm. The catalysed reaction is Hydrolysis of proteins in presence of ATP.. ATP-dependent serine protease that mediates the selective degradation of mutant and abnormal proteins as well as certain short-lived regulatory proteins. Required for cellular homeostasis and for survival from DNA damage and developmental changes induced by stress. Degrades polypeptides processively to yield small peptide fragments that are 5 to 10 amino acids long. Binds to DNA in a double-stranded, site-specific manner. CcrM is an important target of the Lon protease pathway in C.crescentus. The protein is Lon protease of Caulobacter vibrioides (strain ATCC 19089 / CIP 103742 / CB 15) (Caulobacter crescentus).